Here is a 547-residue protein sequence, read N- to C-terminus: Chaperonin GroEL (547 aa).

Residues 30–33 (TLGP), Lys51, 87–91 (DGTTT), Gly415, and Asp496 contribute to the ATP site.

It belongs to the chaperonin (HSP60) family. As to quaternary structure, forms a cylinder of 14 subunits composed of two heptameric rings stacked back-to-back. Interacts with the co-chaperonin GroES.

The protein resides in the cytoplasm. The catalysed reaction is ATP + H2O + a folded polypeptide = ADP + phosphate + an unfolded polypeptide.. Functionally, together with its co-chaperonin GroES, plays an essential role in assisting protein folding. The GroEL-GroES system forms a nano-cage that allows encapsulation of the non-native substrate proteins and provides a physical environment optimized to promote and accelerate protein folding. In Chlorobium phaeobacteroides (strain DSM 266 / SMG 266 / 2430), this protein is Chaperonin GroEL.